The following is a 330-amino-acid chain: Aspartate--ammonia ligase (330 aa).

This sequence belongs to the class-II aminoacyl-tRNA synthetase family. AsnA subfamily.

It is found in the cytoplasm. It catalyses the reaction L-aspartate + NH4(+) + ATP = L-asparagine + AMP + diphosphate + H(+). It functions in the pathway amino-acid biosynthesis; L-asparagine biosynthesis; L-asparagine from L-aspartate (ammonia route): step 1/1. This is Aspartate--ammonia ligase from Treponema pallidum (strain Nichols).